Consider the following 225-residue polypeptide: Ribosomal RNA large subunit methyltransferase E (225 aa).

S-adenosyl-L-methionine is bound by residues G79, W81, D97, D113, and D137. The active-site Proton acceptor is K177.

It belongs to the class I-like SAM-binding methyltransferase superfamily. RNA methyltransferase RlmE family.

The protein localises to the cytoplasm. It catalyses the reaction uridine(2552) in 23S rRNA + S-adenosyl-L-methionine = 2'-O-methyluridine(2552) in 23S rRNA + S-adenosyl-L-homocysteine + H(+). Functionally, specifically methylates the uridine in position 2552 of 23S rRNA at the 2'-O position of the ribose in the fully assembled 50S ribosomal subunit. In Acidiphilium cryptum (strain JF-5), this protein is Ribosomal RNA large subunit methyltransferase E.